The primary structure comprises 475 residues: Methionine aminopeptidase 2-1 (475 aa).

Positions 1–12 (MGSKSPEGHRQT) are enriched in basic and acidic residues. Residues 1 to 97 (MGSKSPEGHR…LKQSSPPRVL (97 aa)) are disordered. Over residues 44 to 57 (NLDDDNDDDGEANE) the composition is skewed to acidic residues. The span at 70–83 (KKKKRKRSKKKTKK) shows a compositional bias: basic residues. Residue H211 participates in substrate binding. Residues D232, D243, and H312 each coordinate a divalent metal cation. Residue H320 coordinates substrate. A divalent metal cation contacts are provided by E345 and E456.

This sequence belongs to the peptidase M24A family. Methionine aminopeptidase eukaryotic type 2 subfamily. The cofactor is Co(2+). Zn(2+) is required as a cofactor. Mn(2+) serves as cofactor. It depends on Fe(2+) as a cofactor.

It is found in the cytoplasm. The catalysed reaction is Release of N-terminal amino acids, preferentially methionine, from peptides and arylamides.. In terms of biological role, cotranslationally removes the N-terminal methionine from nascent proteins. The N-terminal methionine is often cleaved when the second residue in the primary sequence is small and uncharged (Met-Ala-, Cys, Gly, Pro, Ser, Thr, or Val). The sequence is that of Methionine aminopeptidase 2-1 from Aspergillus niger (strain ATCC MYA-4892 / CBS 513.88 / FGSC A1513).